We begin with the raw amino-acid sequence, 279 residues long: MVWFKRGIPSIKTTDKRDTPEGLWSKCDECGAALHKKQLEDHLYTCPECGHHFRISPDLYFSFLFDDGAWDEFDGQLRAADPLTFVDTKKYPDRVRDTMQKSGKSEACRNATGSMGGSAAVISAMDFGFIGGSMGSVVGEKISRAADKSVELNAPLILISQSGGARMMEGAFSLMQMAKTSARLTRLGERNIPFISLMTDPTMGGISASYAMLGDLNISEPKALIGFAGPRVIRDTIKRDLPEGFQRAEFLKEHGFVDMIVHRKDLRLQLIKLFKHLRG.

The 257-residue stretch at 23–279 folds into the CoA carboxyltransferase N-terminal domain; it reads LWSKCDECGA…LIKLFKHLRG (257 aa). Zn(2+)-binding residues include cysteine 27, cysteine 30, cysteine 46, and cysteine 49. Residues 27–49 form a C4-type zinc finger; the sequence is CDECGAALHKKQLEDHLYTCPEC.

It belongs to the AccD/PCCB family. Acetyl-CoA carboxylase is a heterohexamer composed of biotin carboxyl carrier protein (AccB), biotin carboxylase (AccC) and two subunits each of ACCase subunit alpha (AccA) and ACCase subunit beta (AccD). Requires Zn(2+) as cofactor.

It is found in the cytoplasm. The catalysed reaction is N(6)-carboxybiotinyl-L-lysyl-[protein] + acetyl-CoA = N(6)-biotinyl-L-lysyl-[protein] + malonyl-CoA. It functions in the pathway lipid metabolism; malonyl-CoA biosynthesis; malonyl-CoA from acetyl-CoA: step 1/1. Its function is as follows. Component of the acetyl coenzyme A carboxylase (ACC) complex. Biotin carboxylase (BC) catalyzes the carboxylation of biotin on its carrier protein (BCCP) and then the CO(2) group is transferred by the transcarboxylase to acetyl-CoA to form malonyl-CoA. The sequence is that of Acetyl-coenzyme A carboxylase carboxyl transferase subunit beta from Chlorobaculum parvum (strain DSM 263 / NCIMB 8327) (Chlorobium vibrioforme subsp. thiosulfatophilum).